The sequence spans 328 residues: tRNA uridine(34) hydroxylase (328 aa).

The region spanning 130 to 224 is the Rhodanese domain; it reads LDKDTVVLDT…YGKDPEVQGE (95 aa). Cysteine 184 functions as the Cysteine persulfide intermediate in the catalytic mechanism.

It belongs to the TrhO family.

It catalyses the reaction uridine(34) in tRNA + AH2 + O2 = 5-hydroxyuridine(34) in tRNA + A + H2O. Catalyzes oxygen-dependent 5-hydroxyuridine (ho5U) modification at position 34 in tRNAs. The sequence is that of tRNA uridine(34) hydroxylase from Streptococcus pneumoniae (strain Taiwan19F-14).